The following is a 451-amino-acid chain: NAC domain containing protein 52 (451 aa).

A disordered region spans residues 1–21 (MGRESVAVVTAPPSATAPGTA). The NAC domain occupies 27–178 (LAPGFRFHPT…AYVLCRVFHK (152 aa)). The DNA-binding element occupies 126-184 (LGMKKTLVFHSGRAPDGLRTNWVMHEYRLVEYETEKNGNLVQDAYVLCRVFHKNNIGPP). 2 disordered regions span residues 255–337 (DQQN…TTTT) and 370–400 (KKEK…KVND). Residues 256-270 (QQNHHENDLKPEEHN) show a composition bias toward basic and acidic residues. Residues 272–292 (NNNYDENEETLKREQMEEEER) adopt a coiled-coil conformation. Over residues 318–337 (ESNNNSSRNTQDHCSSTTTT) the composition is skewed to low complexity. Positions 370–384 (KKEKPQQPLRPHKEP) are enriched in basic and acidic residues. Residues 398-446 (VNDLQKEIHQMSVERETFKLEMMSAEAMISILQSRIDALRQENEELKKN) adopt a coiled-coil conformation.

In terms of assembly, interacts with JMJ14 and NAC050. As to expression, mostly expressed in floral organs, and, at low levels, in other organs.

It localises to the nucleus. Its function is as follows. Transcriptional repressor that binds to the motif 5'-(C/T)A(C/A)G-3' in the promoter of target genes. Also binds to the 5'-CTTGNNNNNCAAG-3' consensus sequence in chromatin. Can bind to the mitochondrial dysfunction motif (MDM) present in the upstream regions of mitochondrial dysfunction stimulon (MDS) genes involved in mitochondrial retrograde regulation (MRR). Together with NAC050 and JMJ14, regulates gene expression and flowering time by associating with the histone demethylase JMJ14, probably by the promotion of RNA-mediated gene silencing. Regulates siRNA-dependent post-transcriptional gene silencing (PTGS) through SGS3 expression modulation. Required during pollen development. This Arabidopsis thaliana (Mouse-ear cress) protein is NAC domain containing protein 52.